The primary structure comprises 160 residues: Type IV major fimbrial protein FimA (160 aa).

Residues 1 to 7 (MKSLQKG) constitute a propeptide, leader sequence. At Phe8 the chain carries N-methylphenylalanine. A helical membrane pass occupies residues 8 to 28 (FTLIELMIVVAIIGILAAFAI). A disulfide bond links Cys63 and Cys105.

This sequence belongs to the N-Me-Phe pilin family. The pili are polar flexible filaments of about 5.4 nanometers diameter and 2.5 micrometers average length; they consist of only a single polypeptide chain arranged in a helical configuration of five subunits per turn in the assembled pilus.

The protein resides in the fimbrium. It localises to the membrane. Major component of the type IV fimbriae that plays an essential role in twitching motility, natural transformation, and protease secretion. The sequence is that of Type IV major fimbrial protein FimA (fimA) from Dichelobacter nodosus (Bacteroides nodosus).